A 203-amino-acid chain; its full sequence is GTP-binding protein YPTC1 (203 aa).

GTP contacts are provided by residues 15 to 23 (GDSGVGKSC), 33 to 40 (YTESYIST), 63 to 67 (DTAGQ), 121 to 124 (NKSD), and 151 to 153 (SAK). The Effector region motif lies at 37–45 (YISTIGVDF). The disordered stretch occupies residues 174–203 (ASQPIPTKAGGPVVRPQEGKPINSKSSSCC). Residues Cys202 and Cys203 are each lipidated (S-geranylgeranyl cysteine).

This sequence belongs to the small GTPase superfamily. Rab family.

Its subcellular location is the cell membrane. Functionally, protein transport. Probably involved in vesicular traffic. This is GTP-binding protein YPTC1 (YPTC1) from Chlamydomonas reinhardtii (Chlamydomonas smithii).